We begin with the raw amino-acid sequence, 823 residues long: Hypoxia-inducible factor 1-alpha (823 aa).

Residues 1–30 (MEGAGGANDKKKISSERRKEKSRDAARSRR) are disordered. The tract at residues 1 to 401 (MEGAGGANDK…KEPDALTLLA (401 aa)) is interaction with TSGA10. Positions 8–30 (NDKKKISSERRKEKSRDAARSRR) are enriched in basic and acidic residues. Residues 17–70 (RRKEKSRDAARSRRSKESEVFYELAHQLPLPHNVSSHLDKASVMRLTISYLRVR) form the bHLH domain. The segment at 21–30 (KSRDAARSRR) is DNA-binding. Positions 85–158 (KAQMNCFYLK…THRNGLVKKG (74 aa)) constitute a PAS 1 domain. Positions 170 to 191 (RMKCTLTSRGRTMNIKSATWKV) are required for heterodimer formation with ARNT. Residues 228–298 (PHPSNIEIPL…KTHHDMFTKG (71 aa)) form the PAS 2 domain. At serine 247 the chain carries Phosphoserine; by CK1. Residues 302-345 (TGQYRMLAKRGGYVWIETQATVIYNTKNSQPQCIVCVNYVVSGI) form the PAC domain. Positions 401–600 (APAAGDTIIS…QSASTNTVFQ (200 aa)) are ODD. 4-hydroxyproline is present on proline 402. The span at 494–517 (IQDQPASPSDGSTRQSSPEPNSPS) shows a compositional bias: polar residues. The interval 494 to 521 (IQDQPASPSDGSTRQSSPEPNSPSEYCF) is disordered. The interval 531–575 (FKLELVEKLFAEDTEAKNPFSTQDTDLDLEMLAPYIPMDDDFQLR) is NTAD. Lysine 532 carries the N6-acetyllysine; alternate modification. A Glycyl lysine isopeptide (Lys-Gly) (interchain with G-Cter in ubiquitin); alternate cross-link involves residue lysine 532. Glycyl lysine isopeptide (Lys-Gly) (interchain with G-Cter in ubiquitin) cross-links involve residues lysine 538 and lysine 547. Serine 551 carries the post-translational modification Phosphoserine; by GSK3-beta. Threonine 555 is subject to Phosphothreonine; by GSK3-beta. Proline 564 is subject to 4-hydroxyproline. The residue at position 576 (serine 576) is a Phosphoserine; by PLK3. Residues 576 to 782 (SFDQLSPLEN…SDLACRLLGQ (207 aa)) are ID. Disordered stretches follow at residues 581 to 602 (SPLE…FQPT) and 639 to 685 (PSPP…PRSP). Residue serine 589 is modified to Phosphoserine; by GSK3-beta. The segment covering 651–666 (ATTSPYSDTGSRTASP) has biased composition (polar residues). Position 654 is a phosphoserine; by PLK3 (serine 654). Position 706 is an N6-acetyllysine (lysine 706). The Nuclear localization signal motif lies at 715-721 (RKRKIEH). The tract at residues 783–823 (SMDESGLPQLTSYDCEVNAPIQGSRNLLQGEELLRALDQVN) is CTAD. Residue cysteine 797 is modified to S-nitrosocysteine. The residue at position 800 (asparagine 800) is a (3S)-3-hydroxyasparagine.

Interacts with the ARNT; forms a heterodimer that binds core DNA sequence 5'-TACGTG-3' within the hypoxia response element (HRE) of target gene promoters. Interacts with COPS5; the interaction increases the transcriptional activity of HIF1A through increased stability. Interacts with EP300 (via TAZ-type 1 domains); the interaction is stimulated in response to hypoxia and inhibited by CITED2. Interacts with CREBBP (via TAZ-type 1 domains). Interacts with NCOA1, NCOA2, APEX1 and HSP90. Interacts (hydroxylated within the ODD domain) with VHLL (via beta domain); the interaction, leads to polyubiquitination and subsequent HIF1A proteasomal degradation. During hypoxia, sumoylated HIF1A also binds VHL; the interaction promotes the ubiquitination of HIF1A. Interacts with SENP1; the interaction desumoylates HIF1A resulting in stabilization and activation of transcription. Interacts (via the ODD domain) with NAA10; the interaction appears not to acetylate HIF1A nor have any affect on protein stability, during hypoxia. Interacts with RWDD3; the interaction enhances HIF1A sumoylation. Interacts with TSGA10. Interacts with HIF3A. Interacts with RORA (via the DNA binding domain); the interaction enhances HIF1A transcription under hypoxia through increasing protein stability. Interaction with PSMA7 inhibits the transactivation activity of HIF1A under both normoxic and hypoxia-mimicking conditions. Interacts with USP20. Interacts with RACK1; promotes HIF1A ubiquitination and proteasome-mediated degradation. Interacts (via N-terminus) with USP19. Interacts with SIRT2. Interacts (deacetylated form) with EGLN1. Interacts with CBFA2T3. Interacts with HSP90AA1 and HSP90AB1. Interacts with DCUN1D1; this interaction increases the interaction between VHL and DCUN1D1. Interacts with HIF1AN. Post-translationally, S-nitrosylation of Cys-797 may be responsible for increased recruitment of p300 coactivator necessary for transcriptional activity of HIF-1 complex. Acetylation of Lys-532 by ARD1 increases interaction with VHL and stimulates subsequent proteasomal degradation. Deacetylation of Lys-706 by SIRT2 increases its interaction with and hydroxylation by EGLN1 thereby inactivating HIF1A activity by inducing its proteasomal degradation. In terms of processing, ubiquitinated; in normoxia, following hydroxylation and interaction with VHL. Lys-532 appears to be the principal site of ubiquitination. Clioquinol, the Cu/Zn-chelator, inhibits ubiquitination through preventing hydroxylation at Asn-800. Ubiquitinated by E3 ligase VHL. Deubiquitinated by UCHL1. Post-translationally, requires phosphorylation for DNA-binding. Phosphorylation at Ser-247 by CSNK1D/CK1 represses kinase activity and impairs ARNT binding. Phosphorylation by GSK3-beta and PLK3 promote degradation by the proteasome. The iron and 2-oxoglutarate dependent 3-hydroxylation of asparagine is (S) stereospecific within HIF CTAD domains. In terms of processing, sumoylated; with SUMO1 under hypoxia. Sumoylation is enhanced through interaction with RWDD3. Both sumoylation and desumoylation seem to be involved in the regulation of its stability during hypoxia. Sumoylation can promote either its stabilization or its VHL-dependent degradation by promoting hydroxyproline-independent HIF1A-VHL complex binding, thus leading to HIF1A ubiquitination and proteasomal degradation. Desumoylation by SENP1 increases its stability amd transcriptional activity. There is a disaccord between various publications on the effect of sumoylation and desumoylation on its stability and transcriptional activity. Post-translationally, in normoxia, is hydroxylated on Pro-402 and Pro-564 in the oxygen-dependent degradation domain (ODD) by EGLN1/PHD2 and EGLN2/PHD1. EGLN3/PHD3 has also been shown to hydroxylate Pro-564. The hydroxylated prolines promote interaction with VHL, initiating rapid ubiquitination and subsequent proteasomal degradation. Deubiquitinated by USP20. Under hypoxia, proline hydroxylation is impaired and ubiquitination is attenuated, resulting in stabilization. In normoxia, is hydroxylated on Asn-800 by HIF1AN, thus abrogating interaction with CREBBP and EP300 and preventing transcriptional activation. Repressed by iron ion, via Fe(2+) prolyl hydroxylase (PHD) enzymes-mediated hydroxylation and subsequent proteasomal degradation.

The protein localises to the cytoplasm. Its subcellular location is the nucleus. Induced by reactive oxygen species (ROS). In terms of biological role, functions as a master transcriptional regulator of the adaptive response to hypoxia. Under hypoxic conditions, activates the transcription of over 40 genes, including erythropoietin, glucose transporters, glycolytic enzymes, vascular endothelial growth factor, HILPDA, and other genes whose protein products increase oxygen delivery or facilitate metabolic adaptation to hypoxia. Plays an essential role in embryonic vascularization, tumor angiogenesis and pathophysiology of ischemic disease. Heterodimerizes with ARNT; heterodimer binds to core DNA sequence 5'-TACGTG-3' within the hypoxia response element (HRE) of target gene promoters. Activation requires recruitment of transcriptional coactivators such as CREBBP and EP300. Activity is enhanced by interaction with NCOA1 and/or NCOA2. Interaction with redox regulatory protein APEX1 seems to activate CTAD and potentiates activation by NCOA1 and CREBBP. Involved in the axonal distribution and transport of mitochondria in neurons during hypoxia. The polypeptide is Hypoxia-inducible factor 1-alpha (HIF1A) (Bos taurus (Bovine)).